We begin with the raw amino-acid sequence, 229 residues long: MKIKATFSCPHSLEEAKTIQENLKKKVILEDQFSEVNYVAGVDVGFRDNYQLTQAAIAVLSFPKLELVETQIACLPTTFPYIPGFLSFREIPAILKALEKLKIPPNIILCDGQGIAHPRRLGIASHLGVLIDLPTIGVAKSLLVGKHEEVPPEKGNWQPLIDKGEIIGVVLRSRTNIKPIYVSIGHKISLPTAIDYVMQCLTKYRLPETTRWADKLASNKGNMINLSKI.

2 residues coordinate Mg(2+): Asp43 and Asp111.

It belongs to the endonuclease V family. The cofactor is Mg(2+).

It localises to the cytoplasm. It catalyses the reaction Endonucleolytic cleavage at apurinic or apyrimidinic sites to products with a 5'-phosphate.. Its function is as follows. DNA repair enzyme involved in the repair of deaminated bases. Selectively cleaves double-stranded DNA at the second phosphodiester bond 3' to a deoxyinosine leaving behind the intact lesion on the nicked DNA. The polypeptide is Endonuclease V (Rippkaea orientalis (strain PCC 8801 / RF-1) (Cyanothece sp. (strain PCC 8801))).